The primary structure comprises 410 residues: Single Ig IL-1-related receptor (410 aa).

The Extracellular portion of the chain corresponds to 1–118 (MPGVCDRAPD…TLQRAGPTSH (118 aa)). The 101-residue stretch at 9-109 (PDFLSPSEDQ…IQNISFSSFT (101 aa)) folds into the Ig-like C2-type domain. Residues N31, N73, N86, and N102 are each glycosylated (N-linked (GlcNAc...) asparagine). C32 and C98 form a disulfide bridge. Residues 119-139 (VAAVLASLLVLLALLLAALLY) form a helical; Signal-anchor for type III membrane protein membrane-spanning segment. The Cytoplasmic portion of the chain corresponds to 140–410 (VKCRLNVLLW…FYCLVSKDDM (271 aa)). The 145-residue stretch at 163-307 (KLYDAYVSYS…DFWKEVQLAL (145 aa)) folds into the TIR domain. A disordered region spans residues 340–390 (EGRALDSEVDPDPEGDLGVRGPVFGEPSAPPHTSGVSLGESRSSEVDVSDL). At S383 the chain carries Phosphoserine.

This sequence belongs to the interleukin-1 receptor family. In terms of assembly, interacts with IL1R1, IRAK1, TLR4, TLR5, TLR9 and TRAF6. Upon IL-1 stimulation found in a complex at least composed of IL1R1, SIGIRR, MYD88, IRAK1 and TRAF6. Upon stimulation with LPC found in a complex at least composed of TLR4, SIG1IR, MYD88, IRAK1 and TRAF6. Interacts with PALM3. In terms of tissue distribution, mainly expressed in epithelial tissues such as kidney, lung and gut.

The protein resides in the membrane. Acts as a negative regulator of the Toll-like and IL-1R receptor signaling pathways. Attenuates the recruitment of receptor-proximal signaling components to the TLR4 receptor, probably through an TIR-TIR domain interaction with TLR4. Through its extracellular domain interferes with the heterodimerization of Il1R1 and IL1RAP. This chain is Single Ig IL-1-related receptor (SIGIRR), found in Homo sapiens (Human).